The sequence spans 380 residues: MTTPIRFELIKTCRQTGARLGILHTPHGSFETPMFMPVGTLATVKTLSPEELKEMGAGVILSNTYHLWLRPGHDIVAEAGGLHAFMNWDRGILTDSGGFQVFSLSEFRRIEEEGVYFRNHLNGDKLFLSPEKATEIQNALGADIIMAFDECPPYPATYDYMKRSVERTSRWAERCLKAHRRSNEQGLFGIVQGGEYEDLRRQSARDLVSLDFPGYAVGGLSVGEPKDVMNRVLEFTTPLLPTDKPRYLMGVGSPDSLIDGAIRGIDMFDCVLPTRIGRNGTVMTSEGRVVIKNAQYARDFTPLDPNCDCYTCRNYTRAYIRHLIKCDETFGIRLTSYHNVYFLIKLMEQVRQAIREDRLADFREEFFERYGFNKPNAKNF.

The active-site Proton acceptor is the Asp-95. Substrate contacts are provided by residues 95–99 (DSGGF), Asp-149, Gln-192, and Gly-219. The tract at residues 250 to 256 (GVGSPDS) is RNA binding. The active-site Nucleophile is the Asp-269. An RNA binding; important for wobble base 34 recognition region spans residues 274-278 (TRIGR). Zn(2+) contacts are provided by Cys-307, Cys-309, Cys-312, and His-338.

The protein belongs to the queuine tRNA-ribosyltransferase family. Homodimer. Within each dimer, one monomer is responsible for RNA recognition and catalysis, while the other monomer binds to the replacement base PreQ1. Zn(2+) serves as cofactor.

It catalyses the reaction 7-aminomethyl-7-carbaguanine + guanosine(34) in tRNA = 7-aminomethyl-7-carbaguanosine(34) in tRNA + guanine. It functions in the pathway tRNA modification; tRNA-queuosine biosynthesis. Its function is as follows. Catalyzes the base-exchange of a guanine (G) residue with the queuine precursor 7-aminomethyl-7-deazaguanine (PreQ1) at position 34 (anticodon wobble position) in tRNAs with GU(N) anticodons (tRNA-Asp, -Asn, -His and -Tyr). Catalysis occurs through a double-displacement mechanism. The nucleophile active site attacks the C1' of nucleotide 34 to detach the guanine base from the RNA, forming a covalent enzyme-RNA intermediate. The proton acceptor active site deprotonates the incoming PreQ1, allowing a nucleophilic attack on the C1' of the ribose to form the product. After dissociation, two additional enzymatic reactions on the tRNA convert PreQ1 to queuine (Q), resulting in the hypermodified nucleoside queuosine (7-(((4,5-cis-dihydroxy-2-cyclopenten-1-yl)amino)methyl)-7-deazaguanosine). The sequence is that of Queuine tRNA-ribosyltransferase from Geobacillus thermodenitrificans (strain NG80-2).